Consider the following 130-residue polypeptide: ATP synthase epsilon chain, chloroplastic (130 aa).

This sequence belongs to the ATPase epsilon chain family. F-type ATPases have 2 components, CF(1) - the catalytic core - and CF(0) - the membrane proton channel. CF(1) has five subunits: alpha(3), beta(3), gamma(1), delta(1), epsilon(1). CF(0) has three main subunits: a, b and c.

The protein resides in the plastid. It localises to the chloroplast thylakoid membrane. Functionally, produces ATP from ADP in the presence of a proton gradient across the membrane. In Tupiella akineta (Green alga), this protein is ATP synthase epsilon chain, chloroplastic.